A 310-amino-acid chain; its full sequence is L-lactate dehydrogenase (310 aa).

Residues valine 17, aspartate 38, lysine 43, tyrosine 69, and 83 to 84 (GA) contribute to the NAD(+) site. 2 residues coordinate substrate: glutamine 86 and arginine 92. Residues serine 105, 122 to 124 (ATN), and serine 147 contribute to the NAD(+) site. 124–127 (NPVD) is a binding site for substrate. 152–155 (DTAR) contributes to the substrate binding site. The beta-D-fructose 1,6-bisphosphate site is built by arginine 157 and histidine 172. The active-site Proton acceptor is the histidine 179. The residue at position 218 (tyrosine 218) is a Phosphotyrosine. Residue threonine 227 participates in substrate binding.

This sequence belongs to the LDH/MDH superfamily. LDH family. As to quaternary structure, homotetramer.

It is found in the cytoplasm. The enzyme catalyses (S)-lactate + NAD(+) = pyruvate + NADH + H(+). Its pathway is fermentation; pyruvate fermentation to lactate; (S)-lactate from pyruvate: step 1/1. With respect to regulation, allosterically activated by fructose 1,6-bisphosphate (FBP). Functionally, catalyzes the conversion of lactate to pyruvate. The polypeptide is L-lactate dehydrogenase (Halalkalibacterium halodurans (strain ATCC BAA-125 / DSM 18197 / FERM 7344 / JCM 9153 / C-125) (Bacillus halodurans)).